A 161-amino-acid polypeptide reads, in one-letter code: Phosphopantetheine adenylyltransferase (161 aa).

Thr-9 lines the substrate pocket. Residues 9–10 (TF) and His-17 contribute to the ATP site. Substrate-binding residues include Lys-41, Leu-73, and Arg-87. ATP is bound by residues 88–90 (GLR), Glu-98, and 123–129 (YQFISGT).

Belongs to the bacterial CoaD family. Homohexamer. Mg(2+) is required as a cofactor.

Its subcellular location is the cytoplasm. The enzyme catalyses (R)-4'-phosphopantetheine + ATP + H(+) = 3'-dephospho-CoA + diphosphate. It functions in the pathway cofactor biosynthesis; coenzyme A biosynthesis; CoA from (R)-pantothenate: step 4/5. Functionally, reversibly transfers an adenylyl group from ATP to 4'-phosphopantetheine, yielding dephospho-CoA (dPCoA) and pyrophosphate. This Cupriavidus taiwanensis (strain DSM 17343 / BCRC 17206 / CCUG 44338 / CIP 107171 / LMG 19424 / R1) (Ralstonia taiwanensis (strain LMG 19424)) protein is Phosphopantetheine adenylyltransferase.